Here is a 371-residue protein sequence, read N- to C-terminus: Phospho-N-acetylmuramoyl-pentapeptide-transferase (371 aa).

Helical transmembrane passes span 19 to 39, 48 to 68, 95 to 115, 119 to 139, 155 to 175, 180 to 200, 227 to 247, 284 to 304, and 349 to 369; these read LYWL…IYSG, IVAP…WAVP, TMGG…WVAA, NLLE…VGWF, AKLR…WLFL, ISGL…FLAI, AIAF…LMIF, AVGL…LFLV, and VVST…GLNA.

Belongs to the glycosyltransferase 4 family. MraY subfamily. Requires Mg(2+) as cofactor.

The protein localises to the cell inner membrane. It catalyses the reaction UDP-N-acetyl-alpha-D-muramoyl-L-alanyl-gamma-D-glutamyl-meso-2,6-diaminopimeloyl-D-alanyl-D-alanine + di-trans,octa-cis-undecaprenyl phosphate = di-trans,octa-cis-undecaprenyl diphospho-N-acetyl-alpha-D-muramoyl-L-alanyl-D-glutamyl-meso-2,6-diaminopimeloyl-D-alanyl-D-alanine + UMP. It functions in the pathway cell wall biogenesis; peptidoglycan biosynthesis. Catalyzes the initial step of the lipid cycle reactions in the biosynthesis of the cell wall peptidoglycan: transfers peptidoglycan precursor phospho-MurNAc-pentapeptide from UDP-MurNAc-pentapeptide onto the lipid carrier undecaprenyl phosphate, yielding undecaprenyl-pyrophosphoryl-MurNAc-pentapeptide, known as lipid I. The polypeptide is Phospho-N-acetylmuramoyl-pentapeptide-transferase (Acaryochloris marina (strain MBIC 11017)).